Here is a 266-residue protein sequence, read N- to C-terminus: Ribonuclease HII (266 aa).

The RNase H type-2 domain occupies 73–266; it reads SPVAGVDEAG…NCGSRQKCEG (194 aa). A divalent metal cation is bound by residues Asp-79, Glu-80, and Asp-173.

It belongs to the RNase HII family. Requires Mn(2+) as cofactor. The cofactor is Mg(2+).

The protein resides in the cytoplasm. The catalysed reaction is Endonucleolytic cleavage to 5'-phosphomonoester.. Its function is as follows. Endonuclease that specifically degrades the RNA of RNA-DNA hybrids. This chain is Ribonuclease HII, found in Pelotomaculum thermopropionicum (strain DSM 13744 / JCM 10971 / SI).